Here is a 304-residue protein sequence, read N- to C-terminus: DCN1-like protein 3 (304 aa).

Disordered stretches follow at residues 1–86 (MGQC…AEES) and 284–304 (EGEG…EEQT). The N-myristoyl glycine moiety is linked to residue G2. Positions 86–278 (SSLQRLEELF…LFDTFVEWEM (193 aa)) constitute a DCUN1 domain.

In terms of assembly, part of a complex containing DCUN1D3, CUL3 and RBX1. Interacts (via the DCUN1 domain) with the unneddylated cullins: interacts with CUL1, CUL2, CUL3, CUL4A, CUL4B and CUL5; these interactions promote the cullin neddylation and the identity of the cullin dictates the affinity of the interaction. Interacts preferentially with CUL3; this interaction triggers the relocalization of CUL3 to the cell membrane where CUL3 is neddylated. Interacts (via DCUN1 domain) with RBX1. May also interact with regulators or subunits of cullin-RING ligases such as RNF7, ELOB and DDB1; these interactions are bridged by cullins. Interacts (via DCUN1 domain) with CAND1; this interaction is bridged by cullins and strongly inhibits cullin neddylation. These CAND-cullin-DCNL complexes can only be neddylated in the presence of a substrate adapter. Interacts (via DCUN1 domain) with the N-terminally acetylated form of UBE2M and UBE2F. In terms of tissue distribution, tends to be down-regulated in different type of cancers, including lung neuroendocrine carcinoma, thyroid Huerthle cell carcinoma and lung squamous cell carcinoma. Mostly expressed in testis and brain. Highly expressed in liver, bladder and renal normal tissue than their tumor tissue counterparts. Palmitoylation stabilizes DCUN1D3 at the cell membrane.

Its subcellular location is the cell membrane. The protein localises to the cytoplasm. The protein resides in the nucleus. It is found in the perinuclear region. Its function is as follows. Contributes to the neddylation of all cullins by transferring NEDD8 from N-terminally acetylated NEDD8-conjugating E2s enzyme to different cullin C-terminal domain-RBX complexes and may play a role in the cell cycle progression by regulating the SCF ubiquitin E3 ligase complex, after UV damage. At the cell membrane, can promote and as well inhibit cullins neddylation. The polypeptide is DCN1-like protein 3 (Homo sapiens (Human)).